Here is a 177-residue protein sequence, read N- to C-terminus: UPF0340 protein STH78 (177 aa).

This sequence belongs to the UPF0340 family.

In Symbiobacterium thermophilum (strain DSM 24528 / JCM 14929 / IAM 14863 / T), this protein is UPF0340 protein STH78.